Reading from the N-terminus, the 715-residue chain is Dynein axonemal intermediate chain 7 (715 aa).

The interval 291 to 322 (AVSKDLQEENKQENESNSVHEEETKAEGQGDV) is disordered. Basic and acidic residues predominate over residues 295–318 (DLQEENKQENESNSVHEEETKAEG).

It belongs to the DNAI7 family. Part of the multisubunit axonemal dynein complex formed at least of two heavy chains and a number of intermediate and light chains. Associates with tubulin. Interacts with microtubule. In terms of processing, ubiquitinated. Ubiquitination leads to its degradation through the 26S proteasome. Ubiquitin-proteasome-mediated DNAI7 degradation occurs in mitosis.

Its subcellular location is the cell projection. It is found in the cilium. The protein resides in the cytoplasm. Its function is as follows. Via its association with the multisubunit axonemal dynein complex, is potentially involved in the regulation of cilia function. May act as a cell cycle regulator. The protein is Dynein axonemal intermediate chain 7 of Bos taurus (Bovine).